The primary structure comprises 321 residues: NADH-ubiquinone oxidoreductase chain 1 (321 aa).

The next 8 helical transmembrane spans lie at 2-22 (LVML…VAFL), 71-91 (ALFI…WMFI), 104-124 (LLVI…SGWA), 148-168 (LGLI…QAFI), 173-193 (HTWF…STLA), 224-244 (LFFL…AIMF), 255-275 (ILPI…FLWI), and 295-315 (FLPL…SLGG).

The protein belongs to the complex I subunit 1 family.

It localises to the mitochondrion inner membrane. The catalysed reaction is a ubiquinone + NADH + 5 H(+)(in) = a ubiquinol + NAD(+) + 4 H(+)(out). Functionally, core subunit of the mitochondrial membrane respiratory chain NADH dehydrogenase (Complex I) that is believed to belong to the minimal assembly required for catalysis. Complex I functions in the transfer of electrons from NADH to the respiratory chain. The immediate electron acceptor for the enzyme is believed to be ubiquinone. This is NADH-ubiquinone oxidoreductase chain 1 (MT-ND1) from Lampetra fluviatilis (European river lamprey).